The primary structure comprises 396 residues: Probable tRNA sulfurtransferase (396 aa).

The region spanning 63–166 is the THUMP domain; it reads AAAARASARV…GRRAYFFDTI (104 aa). ATP contacts are provided by residues 184 to 185, Arg266, Gly288, and Gln297; that span reads LY.

This sequence belongs to the ThiI family.

The protein resides in the cytoplasm. It carries out the reaction [ThiI sulfur-carrier protein]-S-sulfanyl-L-cysteine + a uridine in tRNA + 2 reduced [2Fe-2S]-[ferredoxin] + ATP + H(+) = [ThiI sulfur-carrier protein]-L-cysteine + a 4-thiouridine in tRNA + 2 oxidized [2Fe-2S]-[ferredoxin] + AMP + diphosphate. It catalyses the reaction [ThiS sulfur-carrier protein]-C-terminal Gly-Gly-AMP + S-sulfanyl-L-cysteinyl-[cysteine desulfurase] + AH2 = [ThiS sulfur-carrier protein]-C-terminal-Gly-aminoethanethioate + L-cysteinyl-[cysteine desulfurase] + A + AMP + 2 H(+). Its pathway is cofactor biosynthesis; thiamine diphosphate biosynthesis. Functionally, catalyzes the ATP-dependent transfer of a sulfur to tRNA to produce 4-thiouridine in position 8 of tRNAs, which functions as a near-UV photosensor. Also catalyzes the transfer of sulfur to the sulfur carrier protein ThiS, forming ThiS-thiocarboxylate. This is a step in the synthesis of thiazole, in the thiamine biosynthesis pathway. The sulfur is donated as persulfide by IscS. In Aeropyrum pernix (strain ATCC 700893 / DSM 11879 / JCM 9820 / NBRC 100138 / K1), this protein is Probable tRNA sulfurtransferase.